Reading from the N-terminus, the 241-residue chain is Outer membrane protein assembly factor BamD (241 aa).

The signal sequence occupies residues 1–17 (MKYQTLSGLLALSLLFG). The N-palmitoyl cysteine moiety is linked to residue Cys18. Cys18 carries the S-diacylglycerol cysteine lipid modification.

The protein belongs to the BamD family. In terms of assembly, part of the Bam complex.

The protein localises to the cell outer membrane. Part of the outer membrane protein assembly complex, which is involved in assembly and insertion of beta-barrel proteins into the outer membrane. The polypeptide is Outer membrane protein assembly factor BamD (Vibrio cholerae serotype O1 (strain ATCC 39315 / El Tor Inaba N16961)).